The primary structure comprises 451 residues: Trigger factor (451 aa).

A PPIase FKBP-type domain is found at 165-250 (DDKLTIDFEG…LHQIQAREAL (86 aa)).

Belongs to the FKBP-type PPIase family. Tig subfamily.

It is found in the cytoplasm. It carries out the reaction [protein]-peptidylproline (omega=180) = [protein]-peptidylproline (omega=0). Its function is as follows. Involved in protein export. Acts as a chaperone by maintaining the newly synthesized protein in an open conformation. Functions as a peptidyl-prolyl cis-trans isomerase. This chain is Trigger factor, found in Helicobacter pylori (strain G27).